The following is a 100-amino-acid chain: Spleen trypsin inhibitor I (100 aa).

The signal sequence occupies residues 1–21 (MKMSRLCLSIALLVLLGTLAA). The propeptide occupies 22–33 (STPGCDTSNQAK). One can recognise a BPTI/Kunitz inhibitor domain in the interval 40–90 (CLEPPYTGPCKAKMIRYFYNAKAGFCETFVYGGCKAKSNNFRSAEDCMRTC). Intrachain disulfides connect Cys-40/Cys-90, Cys-49/Cys-73, and Cys-65/Cys-86. A propeptide is located at residue Leu-100.

The protein resides in the secreted. The polypeptide is Spleen trypsin inhibitor I (Bos taurus (Bovine)).